The following is a 220-amino-acid chain: Iron-sulfur cluster repair protein YtfE (220 aa).

Belongs to the RIC family. YtfE subfamily. In terms of assembly, homodimer.

It is found in the cytoplasm. Functionally, di-iron-containing protein involved in the repair of iron-sulfur clusters damaged by oxidative and nitrosative stress conditions. The polypeptide is Iron-sulfur cluster repair protein YtfE (Salmonella choleraesuis (strain SC-B67)).